A 389-amino-acid chain; its full sequence is Galactose-1-phosphate uridylyltransferase (389 aa).

The protein belongs to the galactose-1-phosphate uridylyltransferase type 2 family.

It is found in the cytoplasm. The enzyme catalyses alpha-D-galactose 1-phosphate + UDP-alpha-D-glucose = alpha-D-glucose 1-phosphate + UDP-alpha-D-galactose. It participates in carbohydrate metabolism; galactose metabolism. This Butyrivibrio fibrisolvens protein is Galactose-1-phosphate uridylyltransferase (galT).